The chain runs to 31 residues: Cytolysin Oshem 2 (31 aa).

It localises to the secreted. The protein resides in the nematocyst. The protein localises to the target cell membrane. In terms of biological role, cytolysin that shows weak hemolysis and weak myonecrosis. The protein is Cytolysin Oshem 2 of Olindias sambaquiensis (Hydromedusa).